A 404-amino-acid polypeptide reads, in one-letter code: uncharacterized protein (404 aa).

The next 6 helical transmembrane spans lie at 37–57 (LLILSVIAFFWGLLGVVFVQF), 92–112 (IYNVIFWLSQILINIPLFVLG), 122–142 (LLTLYFVVVSNVFGFAFSYIP), 188–208 (MFYALIWGFLQAVFYSVILII), 230–250 (IGGILFIVNTLSFLIGYTIGT), and 272–292 (AFFLSPNLVFTIFMNIILGIF).

It is found in the cell membrane. This is an uncharacterized protein from Mycoplasma pneumoniae (strain ATCC 29342 / M129 / Subtype 1) (Mycoplasmoides pneumoniae).